The primary structure comprises 435 residues: Putative magnesium transporter MRS2-H (435 aa).

The interval 19–54 (FSSSPESRRCRSVHRVPSRPRPPLAPPARVMGKGNS) is disordered. 2 consecutive transmembrane segments (helical) span residues 369–389 (LTLI…AAFA) and 408–428 (FVGA…TYAW).

The protein belongs to the CorA metal ion transporter (MIT) (TC 1.A.35.5) family.

It localises to the membrane. Its function is as follows. Putative magnesium transporter. The protein is Putative magnesium transporter MRS2-H (MRS2-H) of Oryza sativa subsp. indica (Rice).